The chain runs to 322 residues: Cysteine protease YopT (322 aa).

The disordered stretch occupies residues 43–72 (SHSNRQKKLSATIKHNQSSRSMLDRKLTSD). Catalysis depends on residues cysteine 139, histidine 258, and aspartate 274.

Belongs to the peptidase C58 family. In terms of assembly, interacts with human ARHA.

It localises to the secreted. Its function is as follows. Cysteine protease, which is translocated into infected cells and plays a central role in pathogenesis by cleaving the C-terminus end of the human small GTPase RhoA/ARHA, a regulator of cytoskeleton. Once cleaved, ARHA loses its lipid modification, and is released from the cell membrane, leading to the subsequent disruption of actin cytoskeleton of the host cell. The protein is Cysteine protease YopT (yopT) of Yersinia enterocolitica.